Reading from the N-terminus, the 289-residue chain is Rhodopsin (289 aa).

At 1–7 (YLVSPAA) the chain is on the extracellular side. A helical membrane pass occupies residues 8–32 (YAALGAYMFLLILIGFPVNFLTLYV). Residues 33–44 (TLEHKKLRTPLN) are Cytoplasmic-facing. Residues 45-67 (YILLNLAVADLFMVLGGFTTTMY) form a helical membrane-spanning segment. Residues 68-81 (TSMHGYFVLGRLGC) lie on the Extracellular side of the membrane. Cysteines 81 and 158 form a disulfide. The helical transmembrane segment at 82 to 104 (NLEGFFATLGGEIALWSLVVLAI) threads the bilayer. A 'Ionic lock' involved in activated form stabilization motif is present at residues 105-107 (ERW). Residues 105–123 (ERWIVVCKPISKFRFTEDN) lie on the Cytoplasmic side of the membrane. Residues 124–144 (AIMGLAFSWVMALACAVPPLV) form a helical membrane-spanning segment. Residues 145–173 (GWLRYIPEGMQCTCGVDYYTRAEGFDNES) lie on the Extracellular side of the membrane. An N-linked (GlcNAc...) asparagine glycan is attached at Asn171. The helical transmembrane segment at 174–195 (FVIYMFIVHFLIPLSVIFFCYG) threads the bilayer. At 196–223 (RLLCAVKEAAAAQQESETTQRAEKEVSR) the chain is on the cytoplasmic side. A helical membrane pass occupies residues 224 to 245 (MVVIMVIGFLVCWLPYASVAWW). The Extracellular segment spans residues 246 to 257 (IFCNQGSDFGPI). The chain crosses the membrane as a helical span at residues 258-279 (FMTLPSFFAKRPAIYNPMIYIC). Lys267 carries the post-translational modification N6-(retinylidene)lysine. The Cytoplasmic segment spans residues 280 to 289 (MNKQFRHCMI).

Belongs to the G-protein coupled receptor 1 family. Opsin subfamily. Post-translationally, phosphorylated on some or all of the serine and threonine residues present in the C-terminal region. In terms of processing, contains one covalently linked retinal chromophore.

The protein resides in the membrane. It localises to the cell projection. Its subcellular location is the cilium. The protein localises to the photoreceptor outer segment. Functionally, photoreceptor required for image-forming vision at low light intensity. While most salt water fish species use retinal as chromophore, most freshwater fish use 3-dehydroretinal, or a mixture of retinal and 3-dehydroretinal. Light-induced isomerization of 11-cis to all-trans retinal triggers a conformational change that activates signaling via G-proteins. Subsequent receptor phosphorylation mediates displacement of the bound G-protein alpha subunit by arrestin and terminates signaling. The protein is Rhodopsin (rho) of Batrachocottus nikolskii (Fat sculpin).